Reading from the N-terminus, the 256-residue chain is Nuclear shuttle protein (256 aa).

Over residues 1–16 (MYSTSNRRGRSQTQRG) the composition is skewed to polar residues. Positions 1 to 46 (MYSTSNRRGRSQTQRGSHVRRTGVKRSYGAARGDDRRRPNVVSKTQ) are disordered. The Bipartite nuclear localization signal signature appears at 21–42 (RTGVKRSYGAARGDDRRRPNVV). The Nuclear localization signal signature appears at 81 to 96 (SYVKTVPNRTRTYIKL). An interaction with Arabidopsis thaliana NSI protein region spans residues 150–187 (ELFGARIHCHGNLSVVPALKDRYYIRHVTKRVVSLEKD). The Nuclear export signal motif lies at 177–198 (VTKRVVSLEKDTLLIDLHGTTQ).

Belongs to the begomovirus nuclear shuttle protein family. In terms of assembly, binds to single-stranded and double-stranded viral DNA. Interacts with the host nuclear shuttle interacting (NSI) protein. This interaction may allow NSP to recruit NSI monomers to the viral genome and thus regulate nuclear export of viral genome by NSP.

It localises to the host nucleus. Its subcellular location is the host cytoplasm. The protein localises to the host cell membrane. Functionally, binds to the genomic viral ssDNA, shuttles it into and out of the cell nucleus. Begomoviruses use 2 proteins to transport their DNA from cell to cell. The nuclear shuttle protein (NSP) shuttles it between nucleus and cytoplasm and the movement protein (MP) probably transports the DNA-NSP complex to the cell periphery and facilitates movement across the cell wall. The polypeptide is Nuclear shuttle protein (Squash leaf curl virus (SLCV)).